The following is a 118-amino-acid chain: UPF0148 protein LS215_1455 (118 aa).

It belongs to the UPF0148 family.

The polypeptide is UPF0148 protein LS215_1455 (Saccharolobus islandicus (strain L.S.2.15 / Lassen #1) (Sulfolobus islandicus)).